The sequence spans 418 residues: Nickel and cobalt resistance protein CnrC (418 aa).

The N-terminal stretch at 1–29 is a signal peptide; it reads MKQVISSFLCRPRFVGSAIWLLPVALSHA.

This sequence belongs to the outer membrane factor (OMF) (TC 1.B.17) family.

Functionally, the products of the genes cnrA, cnrB, and cnrC are likely to form a membrane-bound protein complex catalyzing an energy-dependent efflux of Ni(2+) and Co(2+). The mechanism of action of the CnrCBA complex may be that of a proton/cation antiporter. This is Nickel and cobalt resistance protein CnrC (cnrC) from Cupriavidus metallidurans (strain ATCC 43123 / DSM 2839 / NBRC 102507 / CH34) (Ralstonia metallidurans).